The chain runs to 65 residues: Large ribosomal subunit protein bL35 (65 aa).

Belongs to the bacterial ribosomal protein bL35 family.

The sequence is that of Large ribosomal subunit protein bL35 from Caldicellulosiruptor bescii (strain ATCC BAA-1888 / DSM 6725 / KCTC 15123 / Z-1320) (Anaerocellum thermophilum).